Here is a 101-residue protein sequence, read N- to C-terminus: C-X-C motif chemokine 3 (101 aa).

Positions 1-32 are cleaved as a signal peptide; that stretch reads MAPPTRRLLNAALLLLLLLMATSHQPSGTVVA. Intrachain disulfides connect C37–C63 and C39–C79.

The protein belongs to the intercrine alpha (chemokine CxC) family.

The protein localises to the secreted. Its function is as follows. Ligand for CXCR2. Has chemotactic activity for neutrophils. May play a role in inflammation and exert its effects on endothelial cells in an autocrine fashion. The chain is C-X-C motif chemokine 3 (Cxcl3) from Rattus norvegicus (Rat).